Here is a 217-residue protein sequence, read N- to C-terminus: Adenylate kinase (217 aa).

10–15 is an ATP binding site; that stretch reads GAGKGT. The segment at 30–59 is NMP; that stretch reads STGDMFRAAMKEETPLGLEAKSYIDKGELV. AMP contacts are provided by residues Thr31, Arg36, 57–59, 85–88, and Gln92; these read ELV and GFPR. Residues 126–163 form an LID region; that stretch reads GRRICSVCGTTYHLVFNPPKTPGVCDKDGGDLYQRADD. Arg127 contributes to the ATP binding site. Residues Cys130 and Cys133 each coordinate Zn(2+). ATP is bound at residue 136-137; it reads TY. Zn(2+) contacts are provided by Cys150 and Asp153. Residues Arg160 and Arg171 each contribute to the AMP site. Gln199 is a binding site for ATP.

This sequence belongs to the adenylate kinase family. As to quaternary structure, monomer.

The protein resides in the cytoplasm. The catalysed reaction is AMP + ATP = 2 ADP. It participates in purine metabolism; AMP biosynthesis via salvage pathway; AMP from ADP: step 1/1. Catalyzes the reversible transfer of the terminal phosphate group between ATP and AMP. Plays an important role in cellular energy homeostasis and in adenine nucleotide metabolism. This chain is Adenylate kinase, found in Bacillus velezensis (strain DSM 23117 / BGSC 10A6 / LMG 26770 / FZB42) (Bacillus amyloliquefaciens subsp. plantarum).